A 39-amino-acid chain; its full sequence is Photosystem II reaction center protein L (39 aa).

A helical transmembrane segment spans residues Ser18 to Phe38.

This sequence belongs to the PsbL family. As to quaternary structure, PSII is composed of 1 copy each of membrane proteins PsbA, PsbB, PsbC, PsbD, PsbE, PsbF, PsbH, PsbI, PsbJ, PsbK, PsbL, PsbM, PsbT, PsbX, PsbY, PsbZ, Psb30/Ycf12, peripheral proteins PsbO, CyanoQ (PsbQ), PsbU, PsbV and a large number of cofactors. It forms dimeric complexes.

It localises to the cellular thylakoid membrane. Its function is as follows. One of the components of the core complex of photosystem II (PSII). PSII is a light-driven water:plastoquinone oxidoreductase that uses light energy to abstract electrons from H(2)O, generating O(2) and a proton gradient subsequently used for ATP formation. It consists of a core antenna complex that captures photons, and an electron transfer chain that converts photonic excitation into a charge separation. This subunit is found at the monomer-monomer interface and is required for correct PSII assembly and/or dimerization. In Synechococcus sp. (strain CC9311), this protein is Photosystem II reaction center protein L.